The sequence spans 513 residues: Alpha,alpha-trehalose-phosphate synthase [UDP-forming] (513 aa).

Tyr-40 carries the post-translational modification Phosphotyrosine. D-glucose 6-phosphate-binding residues include Tyr-104 and Asp-158. Residues Arg-294 and Lys-299 each contribute to the UDP site. The UDP-alpha-D-glucose site is built by Arg-294 and Lys-299. Residue Arg-332 coordinates D-glucose 6-phosphate. UDP-alpha-D-glucose is bound at residue Asp-393–Glu-401. Leu-397–Glu-401 is a binding site for UDP. At Ser-503 the chain carries Phosphoserine.

Belongs to the glycosyltransferase 20 family. As to quaternary structure, homomer. Component of the trehalose synthase complex that contains at least tps1, ntp1 and tpp1. Interacts with tpp1. Interacts with ntp1; the interaction is independent of stress conditions.

The protein localises to the cytoplasm. Its subcellular location is the nucleus. It carries out the reaction D-glucose 6-phosphate + UDP-alpha-D-glucose = alpha,alpha-trehalose 6-phosphate + UDP + H(+). The protein operates within carbohydrate biosynthesis. Functionally, synthase catalytic subunit of the trehalose synthase complex that catalyzes the production of trehalose from glucose-6-phosphate and UDP-alpha-D-glucose in a two step process. The disaccharide trehalose serves as a storage carbohydrate that is mobilized during nutrient stress and spore germination. Together with ntp1, regulates the level of trehalose as a protectant for cell integrity during thermal and osmotic stress. The protein is Alpha,alpha-trehalose-phosphate synthase [UDP-forming] of Schizosaccharomyces pombe (strain 972 / ATCC 24843) (Fission yeast).